The following is a 251-amino-acid chain: MKNYLFEVCTNSVESCIAAQEGGANRVELCAGIPEGGTTPSYGEIAMAREVLTTTRLHVIIRPRGGDFLYSPVEVKTMLKDIEMVRQLGADGVVFGCLTTNGGIDVPVMKQLMEASKGLSVTFHRAFDVCRDASEALEQIIDLGCDRILTSGQQATAELGIPLLKELRERANGRITLLAGCGVNEKNICRIAKETGIQEFHFSARESIKSGMEYKNEAVSMGGTVHISEYERNVTTVKRVKDTIESITSSL.

The protein belongs to the CutC family.

It localises to the cytoplasm. The chain is PF03932 family protein CutC from Bacteroides fragilis (strain YCH46).